The primary structure comprises 23 residues: Acidic phospholipase A2 Ts-A2 (23 aa).

It depends on Ca(2+) as a cofactor. In terms of processing, contains 7 disulfide bonds. Expressed by the venom gland.

The protein localises to the secreted. It carries out the reaction a 1,2-diacyl-sn-glycero-3-phosphocholine + H2O = a 1-acyl-sn-glycero-3-phosphocholine + a fatty acid + H(+). Exhibits moderate hydrolytic activities and prefers the anionic micelles (dPPC with deoxycholate) to the zwitterionic micelles (dPPC with Triton X-100). PLA2 catalyzes the calcium-dependent hydrolysis of the 2-acyl groups in 3-sn-phosphoglycerides. This is Acidic phospholipase A2 Ts-A2 from Trimeresurus stejnegeri (Chinese green tree viper).